A 215-amino-acid polypeptide reads, in one-letter code: Thiamine-phosphate synthase (215 aa).

4-amino-2-methyl-5-(diphosphooxymethyl)pyrimidine contacts are provided by residues 37–41 (QLRIK) and Asn69. The Mg(2+) site is built by Asp70 and Asp89. Ser108 provides a ligand contact to 4-amino-2-methyl-5-(diphosphooxymethyl)pyrimidine. 134-136 (TQT) lines the 2-[(2R,5Z)-2-carboxy-4-methylthiazol-5(2H)-ylidene]ethyl phosphate pocket. Residue Lys137 participates in 4-amino-2-methyl-5-(diphosphooxymethyl)pyrimidine binding. 2-[(2R,5Z)-2-carboxy-4-methylthiazol-5(2H)-ylidene]ethyl phosphate contacts are provided by residues Gly166 and 186–187 (VS).

This sequence belongs to the thiamine-phosphate synthase family. Requires Mg(2+) as cofactor.

The enzyme catalyses 2-[(2R,5Z)-2-carboxy-4-methylthiazol-5(2H)-ylidene]ethyl phosphate + 4-amino-2-methyl-5-(diphosphooxymethyl)pyrimidine + 2 H(+) = thiamine phosphate + CO2 + diphosphate. It carries out the reaction 2-(2-carboxy-4-methylthiazol-5-yl)ethyl phosphate + 4-amino-2-methyl-5-(diphosphooxymethyl)pyrimidine + 2 H(+) = thiamine phosphate + CO2 + diphosphate. It catalyses the reaction 4-methyl-5-(2-phosphooxyethyl)-thiazole + 4-amino-2-methyl-5-(diphosphooxymethyl)pyrimidine + H(+) = thiamine phosphate + diphosphate. It functions in the pathway cofactor biosynthesis; thiamine diphosphate biosynthesis; thiamine phosphate from 4-amino-2-methyl-5-diphosphomethylpyrimidine and 4-methyl-5-(2-phosphoethyl)-thiazole: step 1/1. Condenses 4-methyl-5-(beta-hydroxyethyl)thiazole monophosphate (THZ-P) and 2-methyl-4-amino-5-hydroxymethyl pyrimidine pyrophosphate (HMP-PP) to form thiamine monophosphate (TMP). The chain is Thiamine-phosphate synthase from Yersinia pestis (strain Pestoides F).